The sequence spans 203 residues: A-type ATP synthase subunit E (203 aa).

This sequence belongs to the V-ATPase E subunit family. As to quaternary structure, has multiple subunits with at least A(3), B(3), C, D, E, F, H, I and proteolipid K(x).

It is found in the cell membrane. Its function is as follows. Component of the A-type ATP synthase that produces ATP from ADP in the presence of a proton gradient across the membrane. The polypeptide is A-type ATP synthase subunit E (Methanococcus maripaludis (strain DSM 14266 / JCM 13030 / NBRC 101832 / S2 / LL)).